Consider the following 545-residue polypeptide: Chaperonin GroEL (545 aa).

Residues 30–33 (TLGP), Lys51, 87–91 (DGTTT), Gly415, and Asp495 each bind ATP.

Belongs to the chaperonin (HSP60) family. In terms of assembly, forms a cylinder of 14 subunits composed of two heptameric rings stacked back-to-back. Interacts with the co-chaperonin GroES.

Its subcellular location is the cytoplasm. The catalysed reaction is ATP + H2O + a folded polypeptide = ADP + phosphate + an unfolded polypeptide.. In terms of biological role, together with its co-chaperonin GroES, plays an essential role in assisting protein folding. The GroEL-GroES system forms a nano-cage that allows encapsulation of the non-native substrate proteins and provides a physical environment optimized to promote and accelerate protein folding. The protein is Chaperonin GroEL of Shewanella sp. (strain ANA-3).